Consider the following 171-residue polypeptide: MKIDVVREMMAQRGFEEYKIRPEYMVGVNRETNDYIYIKIFPGKFELNTVREFLARQFYPIIDPDEKIVTKKTFKHIVQLVIISKTFQNSHFKEFREISRRIQLIRSDFFNINITTKAPRHERVPKDYIKNRFEIPIIKETDPNCIFYNFVKDDVIRVTRSDGDICYRLVK.

This is an uncharacterized protein from Aedes vexans (Inland floodwater mosquito).